The following is a 329-amino-acid chain: Caveolae-associated protein 4a (329 aa).

2 disordered regions span residues 198-260 and 274-329; these read SKEN…NIAK and KERT…IHED. Residues 198-262 adopt a coiled-coil conformation; sequence SKENMNKTRE…RLKENIAKKA (65 aa). Over residues 201–220 the composition is skewed to basic and acidic residues; sequence NMNKTREKTRENLSKTKESL. Polar residues predominate over residues 221-232; the sequence is SKTGQTLGTKFN. Residues 242-260 show a composition bias toward basic and acidic residues; sequence EQREKIKQSSERLKENIAK. Positions 279-290 are enriched in low complexity; the sequence is AEGQEGAEAEPA. Threonine 292 carries the phosphothreonine modification. Basic and acidic residues predominate over residues 310–329; it reads TENKREGPVSEEGATRIHED.

The protein belongs to the CAVIN family.

The protein resides in the cytoplasm. Its subcellular location is the myofibril. The protein localises to the sarcomere. It is found in the membrane. It localises to the caveola. In terms of biological role, induces rhoa activation and activates nppa transcription and myofibrillar organization through the rho/rock signaling pathway. The chain is Caveolae-associated protein 4a (cavin4a) from Danio rerio (Zebrafish).